Consider the following 163-residue polypeptide: ADP-ribosylation factor-like protein 2-binding protein (163 aa).

The protein belongs to the ARL2BP family. In terms of assembly, interacts with GTP bound ARL2 and ARL3; the complex ARL2-ARL2BP as well as ARL2BP alone, binds to SLC25A4/ANT1. Interaction with ARL2 may be required for targeting to cilia basal body. Interacts with STAT3; interaction is enhanced with ARL2. Found in a complex with ARL2BP, ARL2 and SLC25A6. Found in a complex with ARL2, ARL2BP and SLC25A4. Interacts with STAT2, STAT3 and STAT4. In terms of tissue distribution, widely expressed, with most abundant activity in brain, especially in hippocampus and cortex. Also expressed in lung, cerebellum, liver, kidney, retina, spleen, muscle and heart (at protein level).

Its subcellular location is the cytoplasm. It is found in the mitochondrion intermembrane space. The protein localises to the cytoskeleton. The protein resides in the microtubule organizing center. It localises to the centrosome. Its subcellular location is the nucleus. It is found in the cilium basal body. Its function is as follows. Together with ARL2, plays a role in the nuclear translocation, retention and transcriptional activity of STAT3. May play a role as an effector of ARL2. This Mus musculus (Mouse) protein is ADP-ribosylation factor-like protein 2-binding protein (Arl2bp).